The chain runs to 352 residues: MTSFDALLVAGFGGPESMAEVPDFLQRVSGGHIPPDRLAEVEHHYARFGGVSPVNAQHRALAAALGEALVARGIDVPIANANRHSMPYMDQALADLQSRGIRRVLTLVPTPYASYSGCRAYREELLAGTRIDDEGRPALQVVKLDPYADLPALVTAQVQLLRAALADHPDAHLVFTTHSIPTAMAETSGPHGNAYIPQHLALIDAVMAELAALGLRPSWELAYQSRSGSPRTPWLEPDINDVITRLAGEGVRDVICSPIGFLTDHMEVVWDLDTEAAATAAEHSMAFTRVATVGTLPVFIEGLADLIVAALSTKPGTGPDAPAARHWCTPDCCPNARIAGRPTIPGFAAGPR.

Fe-coproporphyrin III is bound by residues S52 and Y121. H178 and E267 together coordinate Fe(2+).

The protein belongs to the ferrochelatase family.

It is found in the cytoplasm. It catalyses the reaction Fe-coproporphyrin III + 2 H(+) = coproporphyrin III + Fe(2+). The protein operates within porphyrin-containing compound metabolism; protoheme biosynthesis. Its function is as follows. Involved in coproporphyrin-dependent heme b biosynthesis. Catalyzes the insertion of ferrous iron into coproporphyrin III to form Fe-coproporphyrin III. The polypeptide is Coproporphyrin III ferrochelatase (Propionibacterium freudenreichii subsp. freudenreichii).